The primary structure comprises 484 residues: Auxin transporter-like protein 2 (484 aa).

Over 1-59 (MLPQKQGEEAIVSSFNETDQQEGVVGREEEVEDHSFSVKNFLWHGGSVWDAWFSCASNQ) the chain is Cytoplasmic. A helical membrane pass occupies residues 60–77 (VAQVLLTLPYSFSQLGML). Over 78 to 79 (SG) the chain is Extracellular. A helical membrane pass occupies residues 80 to 100 (ILLQVFYGILGSWTAYLISVL). Residues 101-135 (YVEYRSRKEKENVNFKNHVIQWFEVLDGLLGPYWK) lie on the Cytoplasmic side of the membrane. The helical transmembrane segment at 136-156 (ALGLAFNCTFLLFGSVIQLIA) threads the bilayer. Residues 157–172 (CASNIYYINDNLDKRT) are Extracellular-facing. Residues 173–193 (WTYIFGACCATTVFIPSFHNY) traverse the membrane as a helical segment. Topologically, residues 194 to 196 (RIW) are cytoplasmic. A helical membrane pass occupies residues 197–217 (SFLGLGMTTYTAWYLTIASIV). Over 218–232 (HGQAENVTHTGPKKL) the chain is Extracellular. A glycan (N-linked (GlcNAc...) asparagine) is linked at Asn-223. A helical transmembrane segment spans residues 233 to 253 (VLYFTGATNILYTFGGHAVTV). Topologically, residues 254-266 (EIMHAMWKPQKFK) are cytoplasmic. Residues 267-287 (YIYLMATLYVFTLTIPSATAV) traverse the membrane as a helical segment. The Extracellular portion of the chain corresponds to 288–314 (YWAFGDELLNHSNAFSLLPKNGWRDGA). Asn-297 carries N-linked (GlcNAc...) asparagine glycosylation. A helical membrane pass occupies residues 315 to 335 (VILMLIHQFITFGFACTPLYF). At 336–356 (VWEKVIGMHDTRSICLRALAR) the chain is on the cytoplasmic side. A helical membrane pass occupies residues 357-377 (LPVVIPIWFLAIIFPFFGPIN). Ser-378 is a topological domain (extracellular). Residues 379–399 (AVGALLVSFTVYIIPSAAHML) traverse the membrane as a helical segment. The Cytoplasmic segment spans residues 400-425 (TYRKASARKNAAEKPPFFMPSWTAMY). A helical membrane pass occupies residues 426–446 (IFNAFIVIWVLVVGFGFGGWA). Over 447–484 (SMTNFIRQIDTFGLFAKCYQCKPPPVMAAAPPPHALHH) the chain is Extracellular.

Belongs to the amino acid/polyamine transporter 2 family. Amino acid/auxin permease (AAAP) (TC 2.A.18.1) subfamily. Shoots and roots of nodulating plants. Higher levels in roots, flowers and stems, lower in nodules, leaves, petioles and shoot apices.

It is found in the cell membrane. Its function is as follows. Carrier protein involved in proton-driven auxin influx. Mediates the formation of auxin gradient from developing leaves (site of auxin biosynthesis) to tips by contributing to the loading of auxin in vascular tissues and facilitating acropetal (base to tip) auxin transport within inner tissues of the root apex, and basipetal (tip to base) auxin transport within outer tissues of the root apex. May be involved in lateral roots and nodules formation. This is Auxin transporter-like protein 2 (LAX2) from Medicago truncatula (Barrel medic).